The following is a 509-amino-acid chain: Lengsin (509 aa).

Residues 1-34 (MNNEEDLLQEDSTRDEGNETEANSMNTLRRTRKK) are disordered. A GS beta-grasp domain is found at 83–177 (NRLQFVRFEA…VICDTFTVTG (95 aa)). Positions 184-509 (PRYIAKRQLS…ERNKFLEYFI (326 aa)) constitute a GS catalytic domain.

The protein belongs to the glutamine synthetase family. Dodecamer. Interacts with BFSP2 and VIM. Abundantly expressed in lens.

May act as a component of the cytoskeleton or as a chaperone for the reorganization of intermediate filament proteins during terminal differentiation in the lens. Does not seem to have enzymatic activity. This Homo sapiens (Human) protein is Lengsin (LGSN).